The following is a 411-amino-acid chain: Glutamyl-tRNA reductase (411 aa).

Residues 48-51, S106, 111-113, and Q117 each bind substrate; these read TCNR and EDQ. The active-site Nucleophile is the C49. NADP(+) is bound at residue 186–191; sequence GAGDMG.

The protein belongs to the glutamyl-tRNA reductase family. Homodimer.

The enzyme catalyses (S)-4-amino-5-oxopentanoate + tRNA(Glu) + NADP(+) = L-glutamyl-tRNA(Glu) + NADPH + H(+). It functions in the pathway porphyrin-containing compound metabolism; protoporphyrin-IX biosynthesis; 5-aminolevulinate from L-glutamyl-tRNA(Glu): step 1/2. In terms of biological role, catalyzes the NADPH-dependent reduction of glutamyl-tRNA(Glu) to glutamate 1-semialdehyde (GSA). In Clostridium novyi (strain NT), this protein is Glutamyl-tRNA reductase.